Reading from the N-terminus, the 371-residue chain is Palmitoyl-monogalactosyldiacylglycerol delta-7 desaturase, chloroplastic (371 aa).

A chloroplast-targeting transit peptide spans 1-67 (MASLLTKPKP…KGLKRDVTTA (67 aa)). 2 consecutive transmembrane segments (helical) span residues 103–123 (FGAVAVVLSMHLLSLLAPFQF) and 127–147 (AVSVAFGLYIVTGLLGITLSF). The Histidine box-1 motif lies at 148–153 (HRNLSH). A Histidine box-2 motif is present at residues 185–189 (HRYHH). The helical transmembrane segment at 251-271 (ALAVALYAMGGFPFIVWGMGV) threads the bilayer. Residues 317-321 (HNNHH) carry the Histidine box-3 motif.

It belongs to the fatty acid desaturase type 1 family. Fe(2+) is required as a cofactor. Highly expressed in young leaves. Low expression in roots.

The protein resides in the plastid. Its subcellular location is the chloroplast membrane. It carries out the reaction a 1-acyl-2-hexadecanoyl-glycerolipid + 2 reduced [2Fe-2S]-[ferredoxin] + O2 + 2 H(+) = a 1-acyl-2-[(7Z)-hexadecenoyl]-glycerolipid + 2 oxidized [2Fe-2S]-[ferredoxin] + 2 H2O. It functions in the pathway lipid metabolism; oxylipin biosynthesis. It participates in lipid metabolism; polyunsaturated fatty acid biosynthesis. Functionally, fatty acid desaturase involved in the first desaturation step leading to the formation of hexadeca 7,10,13-trienoic acid (16:3(7Z,10Z,13Z)), the major functional components of thylakoid membranes. Required for chloroplast biogenesis at low temperature. Also indirectly involved in the production of the oxylipin dinor-oxo-phyto-dienoic acid implicated in wound signaling. The sequence is that of Palmitoyl-monogalactosyldiacylglycerol delta-7 desaturase, chloroplastic from Arabidopsis thaliana (Mouse-ear cress).